The following is a 337-amino-acid chain: N-acetyl-gamma-glutamyl-phosphate reductase (337 aa).

The active site involves Cys145.

It belongs to the NAGSA dehydrogenase family. Type 1 subfamily.

It localises to the cytoplasm. It carries out the reaction N-acetyl-L-glutamate 5-semialdehyde + phosphate + NADP(+) = N-acetyl-L-glutamyl 5-phosphate + NADPH + H(+). It participates in amino-acid biosynthesis; L-arginine biosynthesis; N(2)-acetyl-L-ornithine from L-glutamate: step 3/4. Catalyzes the NADPH-dependent reduction of N-acetyl-5-glutamyl phosphate to yield N-acetyl-L-glutamate 5-semialdehyde. The sequence is that of N-acetyl-gamma-glutamyl-phosphate reductase from Methanosarcina barkeri (strain Fusaro / DSM 804).